The following is a 64-amino-acid chain: Small ribosomal subunit protein bS21 (64 aa).

The protein belongs to the bacterial ribosomal protein bS21 family.

In Flavobacterium johnsoniae (strain ATCC 17061 / DSM 2064 / JCM 8514 / BCRC 14874 / CCUG 350202 / NBRC 14942 / NCIMB 11054 / UW101) (Cytophaga johnsonae), this protein is Small ribosomal subunit protein bS21.